A 265-amino-acid chain; its full sequence is 4-hydroxy-tetrahydrodipicolinate reductase (265 aa).

NAD(+) contacts are provided by residues 7–12 (GASGRM), Asp33, 96–98 (GTT), and 120–123 (AANF). Catalysis depends on His153, which acts as the Proton donor/acceptor. Residue His154 coordinates (S)-2,3,4,5-tetrahydrodipicolinate. Lys157 (proton donor) is an active-site residue. Residue 163 to 164 (GT) coordinates (S)-2,3,4,5-tetrahydrodipicolinate.

This sequence belongs to the DapB family.

The protein resides in the cytoplasm. The enzyme catalyses (S)-2,3,4,5-tetrahydrodipicolinate + NAD(+) + H2O = (2S,4S)-4-hydroxy-2,3,4,5-tetrahydrodipicolinate + NADH + H(+). It carries out the reaction (S)-2,3,4,5-tetrahydrodipicolinate + NADP(+) + H2O = (2S,4S)-4-hydroxy-2,3,4,5-tetrahydrodipicolinate + NADPH + H(+). It functions in the pathway amino-acid biosynthesis; L-lysine biosynthesis via DAP pathway; (S)-tetrahydrodipicolinate from L-aspartate: step 4/4. In terms of biological role, catalyzes the conversion of 4-hydroxy-tetrahydrodipicolinate (HTPA) to tetrahydrodipicolinate. The protein is 4-hydroxy-tetrahydrodipicolinate reductase of Cupriavidus necator (strain ATCC 17699 / DSM 428 / KCTC 22496 / NCIMB 10442 / H16 / Stanier 337) (Ralstonia eutropha).